Consider the following 76-residue polypeptide: Conotoxin VnMEKL-012 (76 aa).

The signal sequence occupies residues 1-18 (MKLTILFLVAAVLMSTQA). Positions 19 to 42 (LIQHDGEKSQKAKMKFLTARTLSA) are excised as a propeptide. Intrachain disulfides connect Cys49–Cys65, Cys56–Cys70, and Cys64–Cys74.

It belongs to the conotoxin O2 superfamily. In terms of tissue distribution, expressed by the venom duct.

It localises to the secreted. In Conus ventricosus (Mediterranean cone), this protein is Conotoxin VnMEKL-012.